A 236-amino-acid chain; its full sequence is 15,16-dihydrobiliverdin:ferredoxin oxidoreductase (236 aa).

This sequence belongs to the HY2 family.

The enzyme catalyses 15,16-dihydrobiliverdin + oxidized 2[4Fe-4S]-[ferredoxin] = biliverdin IXalpha + reduced 2[4Fe-4S]-[ferredoxin] + 2 H(+). Its function is as follows. Catalyzes the two-electron reduction of biliverdin IX-alpha at the C15 methine bridge. The sequence is that of 15,16-dihydrobiliverdin:ferredoxin oxidoreductase from Prochlorococcus marinus (strain MIT 9312).